Consider the following 509-residue polypeptide: ATP synthase subunit alpha (509 aa).

Residue 169-176 (GDRQTGKT) coordinates ATP.

Belongs to the ATPase alpha/beta chains family. F-type ATPases have 2 components, CF(1) - the catalytic core - and CF(0) - the membrane proton channel. CF(1) has five subunits: alpha(3), beta(3), gamma(1), delta(1), epsilon(1). CF(0) has three main subunits: a(1), b(2) and c(9-12). The alpha and beta chains form an alternating ring which encloses part of the gamma chain. CF(1) is attached to CF(0) by a central stalk formed by the gamma and epsilon chains, while a peripheral stalk is formed by the delta and b chains.

The protein resides in the cell inner membrane. The catalysed reaction is ATP + H2O + 4 H(+)(in) = ADP + phosphate + 5 H(+)(out). Produces ATP from ADP in the presence of a proton gradient across the membrane. The alpha chain is a regulatory subunit. The protein is ATP synthase subunit alpha of Brucella abortus (strain S19).